Here is a 1005-residue protein sequence, read N- to C-terminus: Beta/gamma crystallin domain-containing protein 3 (1005 aa).

A phosphoserine mark is found at Ser-122, Ser-129, Ser-130, Ser-136, and Ser-140. 2 disordered regions span residues 132–159 (EDVL…PSSV) and 173–198 (NFDG…DWRT). The span at 180-189 (QEAEEEEEEA) shows a compositional bias: acidic residues. Beta/gamma crystallin 'Greek key' domains are found at residues 367–416 (GCWI…KRVL), 462–500 (GVWL…HPLQ), 512–556 (LKVI…RVIG), 557–599 (GVWV…RYLQ), 605–647 (SSIT…HVKS), 648–690 (GVWV…RPIQ), 701–737 (HLLK…KVLR), 738–781 (GCWL…QPID), and 828–869 (GLWI…RPMK). Residues 871–1003 (PAVYIRIRNR…GEETQKWDIE (133 aa)) form the Ricin B-type lectin domain.

It belongs to the beta/gamma-crystallin family.

This chain is Beta/gamma crystallin domain-containing protein 3 (Crybg3), found in Mus musculus (Mouse).